Here is a 200-residue protein sequence, read N- to C-terminus: ATP-dependent Clp protease proteolytic subunit (200 aa).

The Nucleophile role is filled by Ser-105. His-130 is a catalytic residue.

This sequence belongs to the peptidase S14 family. Fourteen ClpP subunits assemble into 2 heptameric rings which stack back to back to give a disk-like structure with a central cavity, resembling the structure of eukaryotic proteasomes.

It is found in the cytoplasm. The catalysed reaction is Hydrolysis of proteins to small peptides in the presence of ATP and magnesium. alpha-casein is the usual test substrate. In the absence of ATP, only oligopeptides shorter than five residues are hydrolyzed (such as succinyl-Leu-Tyr-|-NHMec, and Leu-Tyr-Leu-|-Tyr-Trp, in which cleavage of the -Tyr-|-Leu- and -Tyr-|-Trp bonds also occurs).. Functionally, cleaves peptides in various proteins in a process that requires ATP hydrolysis. Has a chymotrypsin-like activity. Plays a major role in the degradation of misfolded proteins. This is ATP-dependent Clp protease proteolytic subunit from Hydrogenovibrio crunogenus (strain DSM 25203 / XCL-2) (Thiomicrospira crunogena).